Here is a 253-residue protein sequence, read N- to C-terminus: Hydroxypyruvate/pyruvate aldolase (253 aa).

The active-site Proton acceptor is the His48. Residues Glu151 and Asp177 each contribute to the a divalent metal cation site.

The protein belongs to the HpcH/HpaI aldolase family. A divalent metal cation is required as a cofactor.

It carries out the reaction D-glyceraldehyde + pyruvate = 2-dehydro-3-deoxy-L-galactonate. Aldolase which can catalyze in vitro the aldolisation reaction between hydroxypyruvate (HPA) or pyruvate (PA) and D-glyceraldehyde (D-GA). The condensation of pyruvate and D-glyceraldehyde produces 2-dehydro-3-deoxy-L-galactonate. Has weak activity with hydroxypyruvate and D-glyceraldehyde. The sequence is that of Hydroxypyruvate/pyruvate aldolase from Sagittula stellata (strain ATCC 700073 / DSM 11524 / E-37).